The sequence spans 415 residues: Polyadenylate-binding protein RBP45C (415 aa).

Residues methionine 1–glycine 77 form a disordered region. The segment covering glutamine 23–glutamine 64 has biased composition (low complexity). 3 consecutive RRM domains span residues arginine 80–leucine 160, histidine 173–asparagine 252, and threonine 278–serine 350. A compositionally biased stretch (polar residues) spans arginine 344 to threonine 356. Residues arginine 344–tyrosine 369 form a disordered region.

Belongs to the polyadenylate-binding RBP45 family. As to quaternary structure, interacts with the poly(A) tail of mRNA in nucleus. As to expression, mostly expressed in seedlings and stems, and, to a lower extent, in leaves and flowers.

It localises to the nucleus. In terms of biological role, heterogeneous nuclear ribonucleoprotein (hnRNP)-protein binding the poly(A) tail of mRNA and probably involved in some steps of pre-mRNA maturation. The chain is Polyadenylate-binding protein RBP45C (RBP45C) from Arabidopsis thaliana (Mouse-ear cress).